The following is a 228-amino-acid chain: 2-C-methyl-D-erythritol 4-phosphate cytidylyltransferase (228 aa).

The protein belongs to the IspD/TarI cytidylyltransferase family. IspD subfamily.

The enzyme catalyses 2-C-methyl-D-erythritol 4-phosphate + CTP + H(+) = 4-CDP-2-C-methyl-D-erythritol + diphosphate. The protein operates within isoprenoid biosynthesis; isopentenyl diphosphate biosynthesis via DXP pathway; isopentenyl diphosphate from 1-deoxy-D-xylulose 5-phosphate: step 2/6. Catalyzes the formation of 4-diphosphocytidyl-2-C-methyl-D-erythritol from CTP and 2-C-methyl-D-erythritol 4-phosphate (MEP). The polypeptide is 2-C-methyl-D-erythritol 4-phosphate cytidylyltransferase (Geobacillus kaustophilus (strain HTA426)).